The following is a 175-amino-acid chain: Cytochrome c-type biogenesis protein CcmE (175 aa).

At 1 to 8 (MNAVRRKK) the chain is on the cytoplasmic side. A helical; Signal-anchor for type II membrane protein transmembrane segment spans residues 9 to 29 (LIWVAATLAGAIIAVLLVIYA). Topologically, residues 30-175 (IGQQTDYYFD…GNHTTSTLQE (146 aa)) are periplasmic. Heme is bound by residues His124 and Tyr128. The interval 142–175 (AAKGVTPTSEQFSPAIPVKQTAGEGNHTTSTLQE) is disordered.

The protein belongs to the CcmE/CycJ family.

It is found in the cell inner membrane. In terms of biological role, heme chaperone required for the biogenesis of c-type cytochromes. Transiently binds heme delivered by CcmC and transfers the heme to apo-cytochromes in a process facilitated by CcmF and CcmH. The polypeptide is Cytochrome c-type biogenesis protein CcmE (Psychrobacter sp. (strain PRwf-1)).